Reading from the N-terminus, the 54-residue chain is Large ribosomal subunit protein bL33 (54 aa).

The protein belongs to the bacterial ribosomal protein bL33 family.

This Elusimicrobium minutum (strain Pei191) protein is Large ribosomal subunit protein bL33.